The following is a 220-amino-acid chain: Large ribosomal subunit protein uL3 (220 aa).

It belongs to the universal ribosomal protein uL3 family. In terms of assembly, part of the 50S ribosomal subunit. Forms a cluster with proteins L14 and L19.

In terms of biological role, one of the primary rRNA binding proteins, it binds directly near the 3'-end of the 23S rRNA, where it nucleates assembly of the 50S subunit. In Staphylococcus carnosus (strain TM300), this protein is Large ribosomal subunit protein uL3.